Consider the following 633-residue polypeptide: Electron transfer flavoprotein-ubiquinone oxidoreductase, mitochondrial (633 aa).

Residues 1–90 (MHRFLVKLSS…NGITSSRCIS (90 aa)) constitute a mitochondrion transit peptide. 102-116 (VLIVGAGPAGLSAAI) contributes to the FAD binding site. An intramembrane segment occupies 140–161 (VGGHIISGNVFEPLALDELLPH). 2 residues coordinate a ubiquinone: Gly334 and Gly335. The stretch at 401 to 421 (IPYPVFPGGAIIGCSAGFLNV) is an intramembrane region. [4Fe-4S] cluster is bound by residues Cys578, Cys602, Cys605, and Cys608. Residues 593 to 622 (PKLQINAQNCLHCKACDIKDPKQNIEWTVP) form the 4Fe-4S ferredoxin-type domain.

This sequence belongs to the ETF-QO/FixC family. Requires [4Fe-4S] cluster as cofactor. The cofactor is FAD.

The protein localises to the mitochondrion inner membrane. The enzyme catalyses a ubiquinone + reduced [electron-transfer flavoprotein] = a ubiquinol + oxidized [electron-transfer flavoprotein] + H(+). With respect to regulation, up-regulated by KIN10, by S1-bZIP specific dimers, and also by C/S1 bZIP heterodimers. Functionally, accepts electrons from ETF and reduces ubiquinone. May act downstream of IVD and D2HGDH in the degradation of phytol or chlorophyll during dark-induced senescence and sugar starvation. The chain is Electron transfer flavoprotein-ubiquinone oxidoreductase, mitochondrial (ETFQO) from Arabidopsis thaliana (Mouse-ear cress).